The following is a 68-amino-acid chain: Protein SlyX homolog (68 aa).

It belongs to the SlyX family.

The polypeptide is Protein SlyX homolog (Brucella suis (strain ATCC 23445 / NCTC 10510)).